Reading from the N-terminus, the 203-residue chain is Cytochrome c oxidase assembly protein CtaG (203 aa).

Topologically, residues 1–19 (MDAGKAERRAGNGRRTDGR) are cytoplasmic. Residues 20–42 (RHLVVAAACAAFIAAMVGVTYAS) traverse the membrane as a helical; Signal-anchor for type II membrane protein segment. The Periplasmic portion of the chain corresponds to 43 to 203 (VPLYAMFCAL…AAARASGTGG (161 aa)).

The protein belongs to the COX11/CtaG family.

The protein localises to the cell inner membrane. In terms of biological role, exerts its effect at some terminal stage of cytochrome c oxidase synthesis, probably by being involved in the insertion of the copper B into subunit I. The protein is Cytochrome c oxidase assembly protein CtaG of Xanthobacter autotrophicus (strain ATCC BAA-1158 / Py2).